A 266-amino-acid polypeptide reads, in one-letter code: Large ribosomal subunit protein eL8 (266 aa).

Residues 104–130 are compositionally biased toward basic and acidic residues; it reads PETKQEKKQRLLARAEQKAAGKGDTPT. A disordered region spans residues 104–135; that stretch reads PETKQEKKQRLLARAEQKAAGKGDTPTKRPPV.

Belongs to the eukaryotic ribosomal protein eL8 family. As to quaternary structure, component of the large ribosomal subunit.

It is found in the cytoplasm. Functionally, component of the large ribosomal subunit. The ribosome is a large ribonucleoprotein complex responsible for the synthesis of proteins in the cell. The protein is Large ribosomal subunit protein eL8 (RPL7A) of Gallus gallus (Chicken).